A 193-amino-acid polypeptide reads, in one-letter code: Ion-translocating oxidoreductase complex subunit A (193 aa).

6 helical membrane-spanning segments follow: residues 5-25 (FLLF…FLGL), 39-59 (IGMG…SWLV), 62-82 (FILL…LVIA), 102-122 (LLGI…VALL), 134-154 (AIYG…FAAI), and 171-191 (SIGL…SGLV).

It belongs to the NqrDE/RnfAE family. The complex is composed of six subunits: RnfA, RnfB, RnfC, RnfD, RnfE and RnfG.

It localises to the cell inner membrane. In terms of biological role, part of a membrane-bound complex that couples electron transfer with translocation of ions across the membrane. In Photorhabdus laumondii subsp. laumondii (strain DSM 15139 / CIP 105565 / TT01) (Photorhabdus luminescens subsp. laumondii), this protein is Ion-translocating oxidoreductase complex subunit A.